A 565-amino-acid chain; its full sequence is Adenine deaminase (565 aa).

The protein belongs to the metallo-dependent hydrolases superfamily. Adenine deaminase family. Requires Mn(2+) as cofactor.

The enzyme catalyses adenine + H2O + H(+) = hypoxanthine + NH4(+). This is Adenine deaminase from Sinorhizobium fredii (strain NBRC 101917 / NGR234).